The sequence spans 77 residues: Acyl carrier protein (77 aa).

Residues 3–77 form the Carrier domain; it reads QEIFEKVKKI…GKAVEHIESK (75 aa). Serine 38 bears the O-(pantetheine 4'-phosphoryl)serine mark.

The protein belongs to the acyl carrier protein (ACP) family. Post-translationally, 4'-phosphopantetheine is transferred from CoA to a specific serine of apo-ACP by AcpS. This modification is essential for activity because fatty acids are bound in thioester linkage to the sulfhydryl of the prosthetic group.

The protein resides in the cytoplasm. It functions in the pathway lipid metabolism; fatty acid biosynthesis. Carrier of the growing fatty acid chain in fatty acid biosynthesis. This Synechocystis sp. (strain ATCC 27184 / PCC 6803 / Kazusa) protein is Acyl carrier protein.